Reading from the N-terminus, the 693-residue chain is Elongation factor G (693 aa).

Positions 9–283 constitute a tr-type G domain; that stretch reads ERVRNIGIIA…AVCDYLPSPV (275 aa). GTP contacts are provided by residues 18 to 25, 82 to 86, and 136 to 139; these read AHIDAGKT, DTPGH, and NKMD.

This sequence belongs to the TRAFAC class translation factor GTPase superfamily. Classic translation factor GTPase family. EF-G/EF-2 subfamily.

It is found in the cytoplasm. Functionally, catalyzes the GTP-dependent ribosomal translocation step during translation elongation. During this step, the ribosome changes from the pre-translocational (PRE) to the post-translocational (POST) state as the newly formed A-site-bound peptidyl-tRNA and P-site-bound deacylated tRNA move to the P and E sites, respectively. Catalyzes the coordinated movement of the two tRNA molecules, the mRNA and conformational changes in the ribosome. This chain is Elongation factor G, found in Dehalococcoides mccartyi (strain ATCC BAA-2266 / KCTC 15142 / 195) (Dehalococcoides ethenogenes (strain 195)).